The chain runs to 404 residues: Acetate kinase (404 aa).

A Mg(2+)-binding site is contributed by asparagine 8. Lysine 15 is a binding site for ATP. Arginine 92 is a substrate binding site. The active-site Proton donor/acceptor is the aspartate 149. Residues 207-211 (HLGSG), 282-284 (DMR), and 327-331 (GIGEN) each bind ATP. Mg(2+) is bound at residue glutamate 378.

The protein belongs to the acetokinase family. As to quaternary structure, homodimer. The cofactor is Mg(2+). Requires Mn(2+) as cofactor.

It is found in the cytoplasm. The enzyme catalyses acetate + ATP = acetyl phosphate + ADP. Its pathway is metabolic intermediate biosynthesis; acetyl-CoA biosynthesis; acetyl-CoA from acetate: step 1/2. Catalyzes the formation of acetyl phosphate from acetate and ATP. Can also catalyze the reverse reaction. This Nitrobacter hamburgensis (strain DSM 10229 / NCIMB 13809 / X14) protein is Acetate kinase.